Consider the following 282-residue polypeptide: Bis(5'-nucleosyl)-tetraphosphatase, symmetrical (282 aa).

Belongs to the Ap4A hydrolase family.

The catalysed reaction is P(1),P(4)-bis(5'-adenosyl) tetraphosphate + H2O = 2 ADP + 2 H(+). Its function is as follows. Hydrolyzes diadenosine 5',5'''-P1,P4-tetraphosphate to yield ADP. This chain is Bis(5'-nucleosyl)-tetraphosphatase, symmetrical, found in Escherichia coli O7:K1 (strain IAI39 / ExPEC).